A 270-amino-acid polypeptide reads, in one-letter code: NFAT activation molecule 1 (270 aa).

A signal peptide spans 1 to 42; it reads MENQPVRWRALPGLPRPPGLPAAPWLLLGVLLLPGTLRLAGG. Residues 43–163 lie on the Extracellular side of the membrane; the sequence is QSVTHTGLPI…YREPPQSPQK (121 aa). One can recognise an Ig-like V-type domain in the interval 50-150; the sequence is LPIMASLANT…RGSGTFILVR (101 aa). The cysteines at positions 65 and 114 are disulfide-linked. N-linked (GlcNAc...) asparagine glycosylation occurs at Asn-107. A helical membrane pass occupies residues 164–184; it reads LLLFGFTGLLSVLSVVGTALL. The Cytoplasmic portion of the chain corresponds to 185-270; the sequence is LWNKKRMRGP…GELNLVYENL (86 aa). The interval 190-219 is disordered; it reads RMRGPGKDPTRKCPDPRSASSPKQHPSESV. Residues 194–204 are compositionally biased toward basic and acidic residues; that stretch reads PGKDPTRKCPD. Residues 207–219 show a composition bias toward polar residues; it reads SASSPKQHPSESV. Residues 209–237 enclose the ITAM domain; the sequence is SSPKQHPSESVYTALQRRETEVYACIENE. Phosphotyrosine is present on residues Tyr-220 and Tyr-231. A disordered region spans residues 234-262; that stretch reads IENEDGSSPTAKQSPLSQERPHRFEDDGE. A compositionally biased stretch (polar residues) spans 239 to 250; it reads GSSPTAKQSPLS.

No direct interaction with the B-cell antigen receptor (BCR). Interacts with SYK; probably involved in BCR signaling. Interacts with ZAP70. N-glycosylated. Highly expressed in neutrophils, primary monocytes, mast cells, monocytic cell lines and lymphocytes. Also expressed in spleen B and T-cells, and lung. Expressed at low level in non-immune tissue.

Its subcellular location is the cell membrane. Its function is as follows. May function in immune system as a receptor which activates via the calcineurin/NFAT-signaling pathway the downstream cytokine gene promoters. Activates the transcription of IL-13 and TNF-alpha promoters. May be involved in the regulation of B-cell, but not T-cell, development. Overexpression activates downstream effectors without ligand binding or antibody cross-linking. In Homo sapiens (Human), this protein is NFAT activation molecule 1 (NFAM1).